Reading from the N-terminus, the 185-residue chain is Monothiol glutaredoxin-S4, mitochondrial (185 aa).

The N-terminal 36 residues, 1–36 (MARLMSSALIRGLVRSSCSPTVAAVAQPTIHQFRNY), are a transit peptide targeting the mitochondrion. Residues 37–74 (SSGLGGDSTATGDSSSTRVAADPDTHQDFQPTTKSSNM) are disordered. Low complexity predominate over residues 43–53 (DSTATGDSSST). A compositionally biased stretch (polar residues) spans 64 to 74 (DFQPTTKSSNM). A Glutaredoxin domain is found at 77–179 (DDIVSQDIKE…DVLGDIAQKR (103 aa)). K94 is a binding site for glutathione. C102 serves as a coordination point for [2Fe-2S] cluster. Residues K131, F143, and 156–157 (SD) each bind glutathione.

This sequence belongs to the glutaredoxin family. CGFS subfamily.

Its subcellular location is the mitochondrion. In terms of biological role, may only reduce GSH-thiol disulfides, but not protein disulfides. The sequence is that of Monothiol glutaredoxin-S4, mitochondrial (GRXS4) from Oryza sativa subsp. japonica (Rice).